Reading from the N-terminus, the 363-residue chain is L-serine dehydratase/L-threonine deaminase (363 aa).

Position 2 is an N-acetylalanine (Ala2). Lys41 is subject to N6-(pyridoxal phosphate)lysine. The disordered stretch occupies residues 74 to 98 (RGRSHSGDEQPHVRSQALLPDTPSP). Residue Pro164 participates in pyridoxal 5'-phosphate binding.

The protein belongs to the serine/threonine dehydratase family. Homodimer. Requires pyridoxal 5'-phosphate as cofactor. Predominantly expressed in the periportal regions of the liver.

Its subcellular location is the cytoplasm. It catalyses the reaction L-serine = pyruvate + NH4(+). The enzyme catalyses L-threonine = 2-oxobutanoate + NH4(+). It functions in the pathway carbohydrate biosynthesis; gluconeogenesis. Functionally, catalyzes the pyridoxal-phosphate-dependent dehydrative deamination of L-threonine and L-serine to ammonia and alpha-ketobutyrate and pyruvate, respectively. This is L-serine dehydratase/L-threonine deaminase (Sds) from Rattus norvegicus (Rat).